Here is a 288-residue protein sequence, read N- to C-terminus: uncharacterized protein (288 aa).

Positions Met1–Thr59 constitute an HTH lysR-type domain. Residues Phe19–Ser38 constitute a DNA-binding region (H-T-H motif).

Belongs to the LysR transcriptional regulatory family.

This is an uncharacterized protein from Haemophilus influenzae (strain ATCC 51907 / DSM 11121 / KW20 / Rd).